The primary structure comprises 251 residues: Imidazole glycerol phosphate synthase subunit HisF (251 aa).

Catalysis depends on residues Asp-11 and Asp-130.

The protein belongs to the HisA/HisF family. As to quaternary structure, heterodimer of HisH and HisF.

Its subcellular location is the cytoplasm. The catalysed reaction is 5-[(5-phospho-1-deoxy-D-ribulos-1-ylimino)methylamino]-1-(5-phospho-beta-D-ribosyl)imidazole-4-carboxamide + L-glutamine = D-erythro-1-(imidazol-4-yl)glycerol 3-phosphate + 5-amino-1-(5-phospho-beta-D-ribosyl)imidazole-4-carboxamide + L-glutamate + H(+). It functions in the pathway amino-acid biosynthesis; L-histidine biosynthesis; L-histidine from 5-phospho-alpha-D-ribose 1-diphosphate: step 5/9. Functionally, IGPS catalyzes the conversion of PRFAR and glutamine to IGP, AICAR and glutamate. The HisF subunit catalyzes the cyclization activity that produces IGP and AICAR from PRFAR using the ammonia provided by the HisH subunit. The chain is Imidazole glycerol phosphate synthase subunit HisF from Bacteroides thetaiotaomicron (strain ATCC 29148 / DSM 2079 / JCM 5827 / CCUG 10774 / NCTC 10582 / VPI-5482 / E50).